The chain runs to 363 residues: 3-dehydroquinate synthase (363 aa).

NAD(+) contacts are provided by residues 72–77 (SGEKEK), 130–131 (TT), Lys-142, and Lys-151. Positions 184, 247, and 264 each coordinate Zn(2+).

This sequence belongs to the sugar phosphate cyclases superfamily. Dehydroquinate synthase family. The cofactor is Co(2+). Zn(2+) serves as cofactor. It depends on NAD(+) as a cofactor.

It localises to the cytoplasm. It catalyses the reaction 7-phospho-2-dehydro-3-deoxy-D-arabino-heptonate = 3-dehydroquinate + phosphate. Its pathway is metabolic intermediate biosynthesis; chorismate biosynthesis; chorismate from D-erythrose 4-phosphate and phosphoenolpyruvate: step 2/7. Catalyzes the conversion of 3-deoxy-D-arabino-heptulosonate 7-phosphate (DAHP) to dehydroquinate (DHQ). This chain is 3-dehydroquinate synthase, found in Bacillus thuringiensis (strain Al Hakam).